Here is a 339-residue protein sequence, read N- to C-terminus: Ketol-acid reductoisomerase (NADP(+)) (339 aa).

A KARI N-terminal Rossmann domain is found at 1 to 182; sequence MRVYYDRDAD…GGGRSGIIET (182 aa). NADP(+) contacts are provided by residues 24–27, lysine 48, serine 51, threonine 53, and 83–86; these read YGSQ and DELQ. The active site involves histidine 108. Glycine 134 is an NADP(+) binding site. Residues 183-328 enclose the KARI C-terminal knotted domain; that stretch reads NFKEECETDL…AKLRGMMPWI (146 aa). Aspartate 191, glutamate 195, glutamate 227, and glutamate 231 together coordinate Mg(2+). Serine 252 is a substrate binding site.

The protein belongs to the ketol-acid reductoisomerase family. It depends on Mg(2+) as a cofactor.

It catalyses the reaction (2R)-2,3-dihydroxy-3-methylbutanoate + NADP(+) = (2S)-2-acetolactate + NADPH + H(+). It carries out the reaction (2R,3R)-2,3-dihydroxy-3-methylpentanoate + NADP(+) = (S)-2-ethyl-2-hydroxy-3-oxobutanoate + NADPH + H(+). The protein operates within amino-acid biosynthesis; L-isoleucine biosynthesis; L-isoleucine from 2-oxobutanoate: step 2/4. Its pathway is amino-acid biosynthesis; L-valine biosynthesis; L-valine from pyruvate: step 2/4. Its function is as follows. Involved in the biosynthesis of branched-chain amino acids (BCAA). Catalyzes an alkyl-migration followed by a ketol-acid reduction of (S)-2-acetolactate (S2AL) to yield (R)-2,3-dihydroxy-isovalerate. In the isomerase reaction, S2AL is rearranged via a Mg-dependent methyl migration to produce 3-hydroxy-3-methyl-2-ketobutyrate (HMKB). In the reductase reaction, this 2-ketoacid undergoes a metal-dependent reduction by NADPH to yield (R)-2,3-dihydroxy-isovalerate. The protein is Ketol-acid reductoisomerase (NADP(+)) of Sinorhizobium medicae (strain WSM419) (Ensifer medicae).